Consider the following 138-residue polypeptide: Large ribosomal subunit protein uL16 (138 aa).

Over residues 1–16 (MLIPKRVKYRRQHRPT) the composition is skewed to basic residues. Residues 1–23 (MLIPKRVKYRRQHRPTRSGISKG) form a disordered region.

It belongs to the universal ribosomal protein uL16 family. Part of the 50S ribosomal subunit.

Functionally, binds 23S rRNA and is also seen to make contacts with the A and possibly P site tRNAs. The chain is Large ribosomal subunit protein uL16 from Corynebacterium glutamicum (strain R).